The following is a 345-amino-acid chain: MDGRTADSPLITAYRGGKPTRRPVWFMRQAGRSLPEYLKVREGVAMLDSCLRPELASEITLQPVRRHDVDAAIFFSDIVIPLKLAGVGVDIVPGVGPVLDKPVRTAEDVAALPQLTWEALEPIREAVRLTVAQLGKTPLIGFAGAPFTLAAYMVEGKPSRDHLGPRTMMHADPETWNALANWAADASGMFLRAQLEAGASAGQLFDSWAGSLGLADYKRFVAPASARALDHVRHLGAPLIHFGTGTSELLVAMRDVGVDVVGVDYRLPLDEANRRLGGTVPLQGNIDPALLSAPWAVLEAHVREVIKAGSFAPGHVLNLGHGVPPETDPDVLTRVVELIHSISPE.

Substrate is bound by residues 28–32, Asp-77, Tyr-152, Ser-207, and His-321; that span reads RQAGR.

It belongs to the uroporphyrinogen decarboxylase family. As to quaternary structure, homodimer.

The protein resides in the cytoplasm. It catalyses the reaction uroporphyrinogen III + 4 H(+) = coproporphyrinogen III + 4 CO2. It participates in porphyrin-containing compound metabolism; protoporphyrin-IX biosynthesis; coproporphyrinogen-III from 5-aminolevulinate: step 4/4. Its function is as follows. Catalyzes the decarboxylation of four acetate groups of uroporphyrinogen-III to yield coproporphyrinogen-III. The sequence is that of Uroporphyrinogen decarboxylase from Arthrobacter sp. (strain FB24).